The sequence spans 384 residues: Alpha-2B adrenergic receptor (384 aa).

The helical transmembrane segment at 1–25 threads the bilayer; it reads AIAAVTTFLILFTVFGNALVILAVL. The Cytoplasmic portion of the chain corresponds to 26–36; the sequence is TSRSLRAPQNL. A helical membrane pass occupies residues 37-62; the sequence is FLVSLAAADILVATLIXPFSLANELL. Over 63 to 72 the chain is Extracellular; the sequence is GYWYFWHTWC. Cysteines 72 and 151 form a disulfide. The helical transmembrane segment at 73-95 threads the bilayer; the sequence is EVYLALXVLXCTSSIVHLCAISL. At 96 to 117 the chain is on the cytoplasmic side; sequence DRYWAVSRALEYNSKRTPRRIX. The chain crosses the membrane as a helical span at residues 118–140; the sequence is GIILTVWLIAAAISLPPLIYKGD. Residues 141-156 lie on the Extracellular side of the membrane; it reads QGPQPHGRPQCRLNQE. A helical transmembrane segment spans residues 157–180; the sequence is AWYILSSSIGSFFAPCLIMILVYL. At 181–348 the chain is on the cytoplasmic side; sequence RIYLIAKRRN…LTREKRFTFV (168 aa). The interval 193–306 is disordered; it reads GPRAQGASKG…SXGSPQLQQP (114 aa). The segment covering 288 to 306 has biased composition (low complexity); that stretch reads PEALPASPASXGSPQLQQP. Residues 349-372 traverse the membrane as a helical segment; that stretch reads LAVVIGVXVLCWFPFFXSYSLGAI. Residues 373–381 lie on the Extracellular side of the membrane; that stretch reads CPQHCTVXH. Residues 382-384 form a helical membrane-spanning segment; that stretch reads GLF.

The protein belongs to the G-protein coupled receptor 1 family. Adrenergic receptor subfamily. ADRA2B sub-subfamily. In terms of assembly, interacts with RAB26. Interacts with PPP1R9B. Interacts with GGA1, GGA2 and GGA3.

The protein resides in the cell membrane. Functionally, alpha-2 adrenergic receptors mediate the catecholamine-induced inhibition of adenylate cyclase through the action of G proteins. The protein is Alpha-2B adrenergic receptor (ADRA2B) of Echinops telfairi (Lesser hedgehog tenrec).